Consider the following 1512-residue polypeptide: ATP-dependent permease YOR1 (1512 aa).

Residues 1–68 form a disordered region; that stretch reads MSPLLPTHWG…KGMKETEDGG (68 aa). Positions 13–29 are enriched in polar residues; it reads APQNEPTLPSPSHSVST. Basic and acidic residues predominate over residues 31–65; sequence VGDEEKLRRSEGSDGEDRINLDSNKYDVKGMKETE. Transmembrane regions (helical) follow at residues 229 to 249, 288 to 308, 363 to 385, 475 to 495, and 507 to 527; these read ASLA…AGFI, GPGI…SLGM, FAAG…IIIL, GMTA…FITY, and IFTV…WPMT. The ABC transmembrane type-1 1 domain maps to 246 to 533; that stretch reads AGFIKVFGDT…WPMTLSSTAD (288 aa). The disordered stretch occupies residues 594–656; sequence VLNGGKPGGP…SAPGIDEEIS (63 aa). The segment covering 619–643 has biased composition (low complexity); the sequence is AEEIQAETAAGQPGAGEASAEGQGQ. An ABC transporter 1 domain is found at 651-871; it reads IDEEISEKKE…NGAFAKLIKE (221 aa). Residue 683-690 coordinates ATP; the sequence is GAIGSGKS. 4 helical membrane passes run 937-957, 974-994, 1067-1087, and 1167-1187; these read GVFM…FYVI, NGFY…ALFF, VILL…VSLL, and FLGS…SSVS. Residues 943–1217 form the ABC transmembrane type-1 2 domain; sequence LLFFCIVVAQ…LVRQIAEVEN (275 aa). An ABC transporter 2 domain is found at 1255–1496; the sequence is IEFKDVRMRY…GGIFTEMCSK (242 aa). ATP is bound at residue 1289-1296; the sequence is GRTGAGKS.

The protein belongs to the ABC transporter superfamily. ABCC family. Conjugate transporter (TC 3.A.1.208) subfamily.

The protein localises to the extracellular vesicle membrane. Its subcellular location is the secreted. In terms of biological role, transmembrane transporter. May play a role in the packaging or formation of extracellular vesicles (EVs), and in the export of virulence factors from EVs. Required for efficient non-lytic exocytosis from host macrophages, the process by which the yeast escapes host macrophages with both host cell and pathogen remaining viable. This chain is ATP-dependent permease YOR1, found in Cryptococcus neoformans var. grubii serotype A (strain H99 / ATCC 208821 / CBS 10515 / FGSC 9487) (Filobasidiella neoformans var. grubii).